The chain runs to 411 residues: ATPase family AAA domain-containing protein 3C (411 aa).

Residue 177–184 (GPPGTGKT) coordinates ATP.

This sequence belongs to the AAA ATPase family.

The sequence is that of ATPase family AAA domain-containing protein 3C (ATAD3C) from Homo sapiens (Human).